The primary structure comprises 318 residues: Pantothenate kinase (318 aa).

An ATP-binding site is contributed by G96–S103.

Belongs to the prokaryotic pantothenate kinase family.

Its subcellular location is the cytoplasm. It catalyses the reaction (R)-pantothenate + ATP = (R)-4'-phosphopantothenate + ADP + H(+). It participates in cofactor biosynthesis; coenzyme A biosynthesis; CoA from (R)-pantothenate: step 1/5. The chain is Pantothenate kinase from Rhodopseudomonas palustris (strain HaA2).